A 168-amino-acid chain; its full sequence is Photosystem I assembly protein Ycf3 (168 aa).

TPR repeat units follow at residues 35-68 (AFTY…EIDP), 72-105 (SYIL…NPFL), and 120-153 (GEQA…TPGN).

Belongs to the Ycf3 family.

The protein resides in the plastid. It localises to the chloroplast thylakoid membrane. In terms of biological role, essential for the assembly of the photosystem I (PSI) complex. May act as a chaperone-like factor to guide the assembly of the PSI subunits. The chain is Photosystem I assembly protein Ycf3 from Solanum tuberosum (Potato).